Reading from the N-terminus, the 174-residue chain is Small t antigen (174 aa).

Methionine 1 bears the N-acetylmethionine; by host mark. The J domain maps to 12 to 75 (QLMDLLGLER…VKYAHQPDFG (64 aa)). A C4-type; atypical zinc finger spans residues 103–116 (CAKKMSANCICLLC). Residues 122–143 (HENRKLYRKDPLVWVDCYCFDC) form an H1C3-type; atypical zinc finger.

Interacts with host PPP2R1A; the interaction inhibits PP2A activity.

It is found in the host cytoplasm. The protein localises to the host nucleus. Functionally, promotes efficient viral genome replication by accelerating both G1 and S phase progression of the cell cycle. Inhibits host PP2A by binding to the A subunit, thereby displacing lower affinity regulatory B subunit. Inactivation of PP2A in turn results in the transactivation of cyclin A and cyclin D1 promoters. Late during the infection cycle, ST may induce dephosphorylation of host eIF4E-binding protein EIF4EBP1 leading to the inhibition of cap-dependent translation. May establish and maintain high levels of viral genomes during persistent infection in cell culture. The polypeptide is Small t antigen (Simian virus 40 (SV40)).